We begin with the raw amino-acid sequence, 255 residues long: Imidazole glycerol phosphate synthase subunit HisF (255 aa).

Active-site residues include D12 and D131.

Belongs to the HisA/HisF family. In terms of assembly, heterodimer of HisH and HisF.

Its subcellular location is the cytoplasm. It carries out the reaction 5-[(5-phospho-1-deoxy-D-ribulos-1-ylimino)methylamino]-1-(5-phospho-beta-D-ribosyl)imidazole-4-carboxamide + L-glutamine = D-erythro-1-(imidazol-4-yl)glycerol 3-phosphate + 5-amino-1-(5-phospho-beta-D-ribosyl)imidazole-4-carboxamide + L-glutamate + H(+). Its pathway is amino-acid biosynthesis; L-histidine biosynthesis; L-histidine from 5-phospho-alpha-D-ribose 1-diphosphate: step 5/9. IGPS catalyzes the conversion of PRFAR and glutamine to IGP, AICAR and glutamate. The HisF subunit catalyzes the cyclization activity that produces IGP and AICAR from PRFAR using the ammonia provided by the HisH subunit. The chain is Imidazole glycerol phosphate synthase subunit HisF from Ruthia magnifica subsp. Calyptogena magnifica.